The sequence spans 962 residues: Protease 3 (962 aa).

The signal sequence occupies residues 1 to 23 (MPRSTWFKALLLLVALWGPAVQA). H88 is a Zn(2+) binding site. The active-site Proton acceptor is the E91. Residues H92 and E169 each coordinate Zn(2+).

The protein belongs to the peptidase M16 family. As to quaternary structure, monomer. It depends on Zn(2+) as a cofactor.

It is found in the periplasm. The catalysed reaction is Preferential cleavage of 16-Tyr-|-Leu-17 and 25-Phe-|-Tyr-26 bonds of oxidized insulin B chain. Also acts on other substrates of Mw less than 7 kDa such as insulin and glucagon.. Endopeptidase that degrades small peptides of less than 7 kDa, such as glucagon and insulin. The sequence is that of Protease 3 (ptrA) from Salmonella typhi.